A 390-amino-acid chain; its full sequence is Fluoride export protein 1 (390 aa).

The interval 1–22 (MVAPLVSESQSSSIEETDEQQQ) is disordered. Over 1–72 (MVAPLVSESQ…RFLDKTQKYY (72 aa)) the chain is Cytoplasmic. The helical transmembrane segment at 73-93 (PVILNIVHGAIWGVLVRKGLM) threads the bilayer. At 94–100 (SLTTYSG) the chain is on the extracellular side. A helical membrane pass occupies residues 101-121 (SFLSGVIWANFAACVVMGLAI). Residues 122–143 (DGEVFWIRLLEEKDYPNKGAIP) are Cytoplasmic-facing. Residues 144–164 (VYTGLTTGFCGTVSSFSSVIL) traverse the membrane as a helical segment. Topologically, residues 165–185 (EAFNKAADTDIGVRHHYPNGA) are extracellular. A helical membrane pass occupies residues 186 to 206 (YGIMQFLAVILAQFGLSIMGF). Residues 207–229 (HMGKQFSAVVDNYLPLVTKRIYK) lie on the Cytoplasmic side of the membrane. A helical transmembrane segment spans residues 230–250 (VLELTSMILGVVLVVITCILI). Residues 251-256 (GVKKQG) are Extracellular-facing. The chain crosses the membrane as a helical span at residues 257–279 (SWRSWTFSMLFAPFGALLRYYLS). The Cytoplasmic portion of the chain corresponds to 280-290 (KFLNNKVSNFP). Residues 291 to 311 (LGTFTANFLGTLLLAVFTLLA) form a helical membrane-spanning segment. Over 312–338 (RGKLPGGKGHIVTNTIALHVLEGLDDG) the chain is Extracellular. A helical transmembrane segment spans residues 339–359 (FCGGLTTVSTFVVELFGLKTL). Over 360-368 (FSYRYGTIS) the chain is Cytoplasmic. The chain crosses the membrane as a helical span at residues 369 to 389 (ILVCFAGVVLILGSYNWSVGL). A topological domain (extracellular) is located at residue aspartate 390.

It belongs to the fluoride channel Fluc/FEX (TC 1.A.43) family.

Its subcellular location is the cell membrane. It carries out the reaction fluoride(in) = fluoride(out). Functionally, fluoride channel required for the rapid expulsion of cytoplasmic fluoride. The sequence is that of Fluoride export protein 1 from Candida albicans (strain SC5314 / ATCC MYA-2876) (Yeast).